The sequence spans 278 residues: NH(3)-dependent NAD(+) synthetase (278 aa).

39 to 46 (GVSGGVDS) contributes to the ATP binding site. D45 contacts Mg(2+). R121 lines the deamido-NAD(+) pocket. Position 141 (T141) interacts with ATP. Residue E146 coordinates Mg(2+). K154 and D161 together coordinate deamido-NAD(+). Positions 170 and 192 each coordinate ATP. 252-253 (HK) contacts deamido-NAD(+).

Belongs to the NAD synthetase family. In terms of assembly, homodimer.

The enzyme catalyses deamido-NAD(+) + NH4(+) + ATP = AMP + diphosphate + NAD(+) + H(+). It participates in cofactor biosynthesis; NAD(+) biosynthesis; NAD(+) from deamido-NAD(+) (ammonia route): step 1/1. In terms of biological role, catalyzes the ATP-dependent amidation of deamido-NAD to form NAD. Uses ammonia as a nitrogen source. The polypeptide is NH(3)-dependent NAD(+) synthetase (Saccharolobus solfataricus (strain ATCC 35092 / DSM 1617 / JCM 11322 / P2) (Sulfolobus solfataricus)).